The following is a 225-amino-acid chain: Phosphoribosylformylglycinamidine synthase subunit PurQ (225 aa).

Residues 4-225 enclose the Glutamine amidotransferase type-1 domain; sequence RIGVITFPGT…LSVLDTLVTA (222 aa). The active-site Nucleophile is the C87. Residues H196 and E198 contribute to the active site.

Part of the FGAM synthase complex composed of 1 PurL, 1 PurQ and 2 PurS subunits.

The protein resides in the cytoplasm. The enzyme catalyses N(2)-formyl-N(1)-(5-phospho-beta-D-ribosyl)glycinamide + L-glutamine + ATP + H2O = 2-formamido-N(1)-(5-O-phospho-beta-D-ribosyl)acetamidine + L-glutamate + ADP + phosphate + H(+). It carries out the reaction L-glutamine + H2O = L-glutamate + NH4(+). Its pathway is purine metabolism; IMP biosynthesis via de novo pathway; 5-amino-1-(5-phospho-D-ribosyl)imidazole from N(2)-formyl-N(1)-(5-phospho-D-ribosyl)glycinamide: step 1/2. Functionally, part of the phosphoribosylformylglycinamidine synthase complex involved in the purines biosynthetic pathway. Catalyzes the ATP-dependent conversion of formylglycinamide ribonucleotide (FGAR) and glutamine to yield formylglycinamidine ribonucleotide (FGAM) and glutamate. The FGAM synthase complex is composed of three subunits. PurQ produces an ammonia molecule by converting glutamine to glutamate. PurL transfers the ammonia molecule to FGAR to form FGAM in an ATP-dependent manner. PurS interacts with PurQ and PurL and is thought to assist in the transfer of the ammonia molecule from PurQ to PurL. The sequence is that of Phosphoribosylformylglycinamidine synthase subunit PurQ from Nocardia farcinica (strain IFM 10152).